The following is a 305-amino-acid chain: Olfactory receptor 5M11 (305 aa).

Residues 1-25 are Extracellular-facing; the sequence is MSNTNGSAITEFILLGLTDCPELQS. N-linked (GlcNAc...) asparagine glycosylation occurs at Asn-5. The chain crosses the membrane as a helical span at residues 26–46; it reads LLFVLFLVVYLVTLLGNLGMI. Topologically, residues 47–54 are cytoplasmic; that stretch reads MLMRLDSR. A helical transmembrane segment spans residues 55–75; sequence LHTPMYFFLTNLAFVDLCYTS. The Extracellular portion of the chain corresponds to 76 to 98; the sequence is NATPQMSTNIVSEKTISFAGCFT. Residues Cys-96 and Cys-188 are joined by a disulfide bond. The helical transmembrane segment at 99 to 119 threads the bilayer; the sequence is QCYIFIALLLTEFYMLAAMAY. Residues 120-138 are Cytoplasmic-facing; the sequence is DRYVAIYDPLRYSVKTSRR. The helical transmembrane segment at 139–159 threads the bilayer; the sequence is VCICLATFPYVYGFSDGLFQA. The Extracellular segment spans residues 160–195; sequence ILTFRLTFCRSSVINHFYCADPPLIKLSCSDTYVKE. A helical transmembrane segment spans residues 196-216; that stretch reads HAMFISAGFNLSSSLTIVLVS. Over 217–236 the chain is Cytoplasmic; that stretch reads YAFILAAILRIKSAEGRHKA. A helical membrane pass occupies residues 237–257; the sequence is FSTCGSHMMAVTLFYGTLFCM. Residues 258–270 are Extracellular-facing; that stretch reads YIRPPTDKTVEES. The chain crosses the membrane as a helical span at residues 271–291; the sequence is KIIAVFYTFVSPVLNPLIYSL. Residues 292-305 lie on the Cytoplasmic side of the membrane; it reads RNKDVKQALKNVLR.

It belongs to the G-protein coupled receptor 1 family.

The protein resides in the cell membrane. Its function is as follows. Odorant receptor. The sequence is that of Olfactory receptor 5M11 (OR5M11) from Homo sapiens (Human).